The chain runs to 411 residues: Dihydrolipoyllysine-residue succinyltransferase component of 2-oxoglutarate dehydrogenase complex (411 aa).

A Lipoyl-binding domain is found at 2–77 (TTEIRVPTLG…EVNALLGAVE (76 aa)). Lys43 bears the N6-lipoyllysine mark. Residues 82 to 100 (SVAKSPSSSETSVSAAPSE) are compositionally biased toward low complexity. A disordered region spans residues 82-115 (SVAKSPSSSETSVSAAPSELEQSSSSNTMPPAPS). The segment covering 101 to 110 (LEQSSSSNTM) has biased composition (polar residues). Positions 111–148 (PPAPSAAKLMAENNIAKSDILGSGKRGQILKEDVLNVL) constitute a Peripheral subunit-binding (PSBD) domain. Residues His382 and Asp386 contribute to the active site.

The protein belongs to the 2-oxoacid dehydrogenase family. Forms a 24-polypeptide structural core with octahedral symmetry. Part of the 2-oxoglutarate dehydrogenase (OGDH) complex composed of E1 (2-oxoglutarate dehydrogenase), E2 (dihydrolipoamide succinyltransferase) and E3 (dihydrolipoamide dehydrogenase); the complex contains multiple copies of the three enzymatic components (E1, E2 and E3). It depends on (R)-lipoate as a cofactor.

It catalyses the reaction N(6)-[(R)-dihydrolipoyl]-L-lysyl-[protein] + succinyl-CoA = N(6)-[(R)-S(8)-succinyldihydrolipoyl]-L-lysyl-[protein] + CoA. It functions in the pathway amino-acid degradation; L-lysine degradation via saccharopine pathway; glutaryl-CoA from L-lysine: step 6/6. In terms of biological role, E2 component of the 2-oxoglutarate dehydrogenase (OGDH) complex which catalyzes the second step in the conversion of 2-oxoglutarate to succinyl-CoA and CO(2). The sequence is that of Dihydrolipoyllysine-residue succinyltransferase component of 2-oxoglutarate dehydrogenase complex (sucB) from Bartonella vinsonii subsp. berkhoffii.